Here is a 312-residue protein sequence, read N- to C-terminus: Elongation factor Ts (312 aa).

Positions 80 to 83 (TDFV) are involved in Mg(2+) ion dislocation from EF-Tu.

It belongs to the EF-Ts family.

Its subcellular location is the cytoplasm. Functionally, associates with the EF-Tu.GDP complex and induces the exchange of GDP to GTP. It remains bound to the aminoacyl-tRNA.EF-Tu.GTP complex up to the GTP hydrolysis stage on the ribosome. This chain is Elongation factor Ts, found in Maricaulis maris (strain MCS10) (Caulobacter maris).